The following is a 308-amino-acid chain: tRNA dimethylallyltransferase 1 (308 aa).

9-16 (GPTGVGKT) provides a ligand contact to ATP. Substrate is bound at residue 11 to 16 (TGVGKT). The segment at 34 to 37 (DSRQ) is interaction with substrate tRNA.

The protein belongs to the IPP transferase family. Monomer. Mg(2+) is required as a cofactor.

It catalyses the reaction adenosine(37) in tRNA + dimethylallyl diphosphate = N(6)-dimethylallyladenosine(37) in tRNA + diphosphate. Its function is as follows. Catalyzes the transfer of a dimethylallyl group onto the adenine at position 37 in tRNAs that read codons beginning with uridine, leading to the formation of N6-(dimethylallyl)adenosine (i(6)A). The chain is tRNA dimethylallyltransferase 1 from Bacteroides thetaiotaomicron (strain ATCC 29148 / DSM 2079 / JCM 5827 / CCUG 10774 / NCTC 10582 / VPI-5482 / E50).